Reading from the N-terminus, the 782-residue chain is Endonuclease MutS2 (782 aa).

336-343 (GPNTGGKT) provides a ligand contact to ATP. The 76-residue stretch at 707–782 (LDLRGYRYED…GFGVTVATLK (76 aa)) folds into the Smr domain.

Belongs to the DNA mismatch repair MutS family. MutS2 subfamily. In terms of assembly, homodimer. Binds to stalled ribosomes, contacting rRNA.

Endonuclease that is involved in the suppression of homologous recombination and thus may have a key role in the control of bacterial genetic diversity. Functionally, acts as a ribosome collision sensor, splitting the ribosome into its 2 subunits. Detects stalled/collided 70S ribosomes which it binds and splits by an ATP-hydrolysis driven conformational change. Acts upstream of the ribosome quality control system (RQC), a ribosome-associated complex that mediates the extraction of incompletely synthesized nascent chains from stalled ribosomes and their subsequent degradation. Probably generates substrates for RQC. The sequence is that of Endonuclease MutS2 from Staphylococcus aureus (strain COL).